We begin with the raw amino-acid sequence, 1434 residues long: DNA-directed RNA polymerase subunit beta (1434 aa).

The protein belongs to the RNA polymerase beta chain family. The RNAP catalytic core consists of 2 alpha, 1 beta, 1 beta' and 1 omega subunit. When a sigma factor is associated with the core the holoenzyme is formed, which can initiate transcription.

It carries out the reaction RNA(n) + a ribonucleoside 5'-triphosphate = RNA(n+1) + diphosphate. Functionally, DNA-dependent RNA polymerase catalyzes the transcription of DNA into RNA using the four ribonucleoside triphosphates as substrates. The protein is DNA-directed RNA polymerase subunit beta of Ureaplasma parvum serovar 3 (strain ATCC 700970).